Here is a 149-residue protein sequence, read N- to C-terminus: Large ribosomal subunit protein bL9 (149 aa).

This sequence belongs to the bacterial ribosomal protein bL9 family.

Functionally, binds to the 23S rRNA. This Vibrio vulnificus (strain CMCP6) protein is Large ribosomal subunit protein bL9.